Consider the following 100-residue polypeptide: MTTATTLGDAVFSLNMTRGEDILYKSSGAIVAAIVVVVVIIVTLVLILLKMYNRRMRTRRELEPKSPKPPVPPALDPNSNGSQQPAAVTSDPADVPVETR.

The Extracellular portion of the chain corresponds to 1–28 (MTTATTLGDAVFSLNMTRGEDILYKSSG). Residues 29–49 (AIVAAIVVVVVIIVTLVLILL) traverse the membrane as a helical segment. Over 50 to 100 (KMYNRRMRTRRELEPKSPKPPVPPALDPNSNGSQQPAAVTSDPADVPVETR) the chain is Cytoplasmic. The segment at 58-100 (TRRELEPKSPKPPVPPALDPNSNGSQQPAAVTSDPADVPVETR) is disordered. A compositionally biased stretch (polar residues) spans 77 to 87 (PNSNGSQQPAA).

Glycosylated. As to expression, expressed in the peripheral nervous system Schwann cells (at protein level).

The protein resides in the cell membrane. Plays a role in myelin formation. This chain is Noncompact myelin-associated protein (Ncmap), found in Rattus norvegicus (Rat).